A 437-amino-acid chain; its full sequence is Transcription factor AP-2-alpha (437 aa).

Lys10 participates in a covalent cross-link: Glycyl lysine isopeptide (Lys-Gly) (interchain with G-Cter in SUMO); alternate. Lys10 is covalently cross-linked (Glycyl lysine isopeptide (Lys-Gly) (interchain with G-Cter in SUMO2); alternate). The interval 14-107 is disordered; it reads CEDRHDGTSN…GQRQSQESGL (94 aa). The short motif at 57–62 is the PPxY motif element; that stretch reads YFPPPY. Composition is skewed to low complexity over residues 65-74 and 88-101; these read IYPQSQDPYS and QPQPQHPGWPGQRQ. Glycyl lysine isopeptide (Lys-Gly) (interchain with G-Cter in SUMO2) cross-links involve residues Lys177 and Lys184. Ser239 carries the phosphoserine; by PKA modification. The tract at residues 280 to 410 is H-S-H (helix-span-helix), dimerization; it reads RRKAANVTLL…YLTEALKAMD (131 aa). Polar residues predominate over residues 414 to 427; sequence LSNNPNSHTDNSAK. The interval 414–437 is disordered; the sequence is LSNNPNSHTDNSAKSSDKEEKHRK. Over residues 428–437 the composition is skewed to basic and acidic residues; sequence SSDKEEKHRK.

It belongs to the AP-2 family. As to quaternary structure, binds DNA as a dimer. Can form homodimers or heterodimers with other AP-2 family members. Interacts with WWOX. Interacts with UBE2I. Interacts with RALBP1 in a complex also containing EPN1 and NUMB during interphase and mitosis. Interacts with CITED4. Interacts with KCTD1; this interaction represses transcription activation. Interacts (via C-terminus) with CITED2 (via C-terminus); the interaction stimulates TFAP2A-transcriptional activation. Interacts (via N-terminus) with EP300 (via N-terminus); the interaction requires CITED2. Interacts with KCTD15; this interaction inhibits TFAP2A transcriptional activation. Sumoylated on Lys-10; which inhibits transcriptional activity.

It is found in the nucleus. Its function is as follows. Sequence-specific DNA-binding protein that interacts with inducible viral and cellular enhancer elements to regulate transcription of selected genes. AP-2 factors bind to the consensus sequence 5'-GCCNNNGGC-3' and activate genes involved in a large spectrum of important biological functions including proper eye, face, body wall, limb and neural tube development. They also suppress a number of genes including MCAM/MUC18, C/EBP alpha and MYC. AP-2-alpha is the only AP-2 protein required for early morphogenesis of the lens vesicle. Together with the CITED2 coactivator, stimulates the PITX2 P1 promoter transcription activation. Associates with chromatin to the PITX2 P1 promoter region. In Mus musculus (Mouse), this protein is Transcription factor AP-2-alpha (Tfap2a).